The following is a 109-amino-acid chain: Hainantoxin-XVIII.2 (109 aa).

The N-terminal stretch at Met-1–Ala-18 is a signal peptide. The propeptide occupies Phe-19 to Ala-46. 4 disulfides stabilise this stretch: Cys-47–Cys-62, Cys-55–Cys-68, Cys-59–Cys-108, and Cys-61–Cys-81.

The protein belongs to the neurotoxin 25 family. F7 subfamily. As to expression, expressed by the venom gland.

The protein resides in the secreted. Functionally, putative ion channel inhibitor. The polypeptide is Hainantoxin-XVIII.2 (Cyriopagopus hainanus (Chinese bird spider)).